The primary structure comprises 215 residues: Octanoyltransferase (215 aa).

One can recognise a BPL/LPL catalytic domain in the interval 31–206 (TDAPDEVWLV…QLVKHLDYAE (176 aa)). Substrate-binding positions include 70 to 77 (RGGQVTYH), 137 to 139 (SLG), and 150 to 152 (GLA). Catalysis depends on cysteine 168, which acts as the Acyl-thioester intermediate.

It belongs to the LipB family.

The protein resides in the cytoplasm. It catalyses the reaction octanoyl-[ACP] + L-lysyl-[protein] = N(6)-octanoyl-L-lysyl-[protein] + holo-[ACP] + H(+). Its pathway is protein modification; protein lipoylation via endogenous pathway; protein N(6)-(lipoyl)lysine from octanoyl-[acyl-carrier-protein]: step 1/2. Its function is as follows. Catalyzes the transfer of endogenously produced octanoic acid from octanoyl-acyl-carrier-protein onto the lipoyl domains of lipoate-dependent enzymes. Lipoyl-ACP can also act as a substrate although octanoyl-ACP is likely to be the physiological substrate. This chain is Octanoyltransferase, found in Pseudomonas fluorescens (strain ATCC BAA-477 / NRRL B-23932 / Pf-5).